A 288-amino-acid polypeptide reads, in one-letter code: Lysosomal thioesterase PPT2 homolog (288 aa).

An N-terminal signal peptide occupies residues 1 to 22 (MRLRLQVLVALLTCSSISVSLA). S98 functions as the Nucleophile in the catalytic mechanism. Residue N192 is glycosylated (N-linked (GlcNAc...) asparagine). Catalysis depends on residues D214 and H269.

The protein belongs to the palmitoyl-protein thioesterase family. Expressed in adult head and crop.

It is found in the lysosome. It catalyses the reaction hexadecanoyl-CoA + H2O = hexadecanoate + CoA + H(+). The enzyme catalyses S-hexadecanoyl-N-acetylcysteamine + H2O = N-acetylcysteamine + hexadecanoate + H(+). Its function is as follows. Catalyzes the cleavage of thioester bonds from S-palmitoyl-CoA or S-palmitoyl-N-acetylcysteamine (unbranched structures) but does not have activity against palmitoylcysteine or palmitoylated proteins, branched structures or bulky head groups. Conversely, hydrolyzes both long and short chain fatty acyl-CoA substrate. The sequence is that of Lysosomal thioesterase PPT2 homolog (Ppt2) from Drosophila melanogaster (Fruit fly).